Consider the following 370-residue polypeptide: tRNA-specific 2-thiouridylase MnmA (370 aa).

Residues 24-31 and Leu50 contribute to the ATP site; that span reads AMSGGVDS. Catalysis depends on Cys118, which acts as the Nucleophile. A disulfide bond links Cys118 and Cys214. Gly142 serves as a coordination point for ATP. Positions 164 to 166 are interaction with tRNA; sequence KDQ. Catalysis depends on Cys214, which acts as the Cysteine persulfide intermediate.

The protein belongs to the MnmA/TRMU family.

The protein localises to the cytoplasm. It catalyses the reaction S-sulfanyl-L-cysteinyl-[protein] + uridine(34) in tRNA + AH2 + ATP = 2-thiouridine(34) in tRNA + L-cysteinyl-[protein] + A + AMP + diphosphate + H(+). Its function is as follows. Catalyzes the 2-thiolation of uridine at the wobble position (U34) of tRNA, leading to the formation of s(2)U34. The chain is tRNA-specific 2-thiouridylase MnmA from Ehrlichia ruminantium (strain Welgevonden).